The following is a 211-amino-acid chain: MGAQVNAAELLQQALSSNIIPNQEFLLQGSILDSAAENLLHRLRGLCDNVDASPETFSDIEMCFSLKLPTEKTPVMTVRVRRAQDVEAPLQLRYIGQPELGDRTRPTLVRSSLDIACTPHVIDFLTEMGFRLDFEYSTKGYMFRKGRMKITVSKILKNMTEPISQSYLVELSVLAPKGQDAIAEDMRIFAEQLKPLVQLEKIDYKRFAQMP.

This sequence belongs to the Mediator complex subunit 18 family. As to quaternary structure, component of the Mediator complex.

Its subcellular location is the nucleus. Its function is as follows. Component of the Mediator complex, a coactivator involved in the regulated transcription of nearly all RNA polymerase II-dependent genes. Mediator functions as a bridge to convey information from gene-specific regulatory proteins to the basal RNA polymerase II transcription machinery. Mediator is recruited to promoters by direct interactions with regulatory proteins and serves as a scaffold for the assembly of a functional preinitiation complex with RNA polymerase II and the general transcription factors. The protein is Mediator of RNA polymerase II transcription subunit 18 (MED18) of Anopheles gambiae (African malaria mosquito).